The primary structure comprises 100 residues: Co-chaperonin GroES (100 aa).

Belongs to the GroES chaperonin family. Heptamer of 7 subunits arranged in a ring. Interacts with the chaperonin GroEL.

The protein localises to the cytoplasm. Its function is as follows. Together with the chaperonin GroEL, plays an essential role in assisting protein folding. The GroEL-GroES system forms a nano-cage that allows encapsulation of the non-native substrate proteins and provides a physical environment optimized to promote and accelerate protein folding. GroES binds to the apical surface of the GroEL ring, thereby capping the opening of the GroEL channel. The sequence is that of Co-chaperonin GroES from Mycobacterium leprae (strain Br4923).